The sequence spans 242 residues: Glutamate transport ATP-binding protein GluA (242 aa).

The ABC transporter domain occupies Ile2–Leu236. An ATP-binding site is contributed by Gly34–Ser41.

Belongs to the ABC transporter superfamily. In terms of assembly, the complex is composed of two ATP-binding proteins (GluA), two transmembrane proteins (GluC and GluD) and a solute-binding protein (GluB).

The protein resides in the cell membrane. The enzyme catalyses a polar amino acid(out) + ATP + H2O = a polar amino acid(in) + ADP + phosphate + H(+). The catalysed reaction is L-glutamate(out) + ATP + H2O = L-glutamate(in) + ADP + phosphate + H(+). Functionally, part of the ABC transporter complex GluABCD involved in glutamate uptake. Probably responsible for energy coupling to the transport system. The sequence is that of Glutamate transport ATP-binding protein GluA from Corynebacterium efficiens (strain DSM 44549 / YS-314 / AJ 12310 / JCM 11189 / NBRC 100395).